The following is a 359-amino-acid chain: Chorismate synthase (359 aa).

The NADP(+) site is built by Arg-48 and Arg-54. FMN is bound by residues 125 to 127, 243 to 244, Gly-283, 298 to 302, and Arg-324; these read RSS, NA, and KPTSS.

This sequence belongs to the chorismate synthase family. Homotetramer. FMNH2 serves as cofactor.

It carries out the reaction 5-O-(1-carboxyvinyl)-3-phosphoshikimate = chorismate + phosphate. The protein operates within metabolic intermediate biosynthesis; chorismate biosynthesis; chorismate from D-erythrose 4-phosphate and phosphoenolpyruvate: step 7/7. Its function is as follows. Catalyzes the anti-1,4-elimination of the C-3 phosphate and the C-6 proR hydrogen from 5-enolpyruvylshikimate-3-phosphate (EPSP) to yield chorismate, which is the branch point compound that serves as the starting substrate for the three terminal pathways of aromatic amino acid biosynthesis. This reaction introduces a second double bond into the aromatic ring system. This is Chorismate synthase from Mannheimia succiniciproducens (strain KCTC 0769BP / MBEL55E).